A 249-amino-acid polypeptide reads, in one-letter code: General transcription factor IIF subunit 2 (249 aa).

Residue Ala2 is modified to N-acetylalanine. An N6-acetyllysine mark is found at Lys22, Lys33, and Lys137. A Phosphoserine modification is found at Ser142. DNA contacts are provided by Gly227 and His229. Ser248 bears the Phosphoserine mark.

This sequence belongs to the TFIIF beta subunit family. As to quaternary structure, heterodimer of an alpha and a beta subunit. Interacts with HTATSF1 and GPBP1. Interacts with URI1. Interacts with GTF2B (via N-terminus); this interaction is inhibited in presence of GTF2F1. Part of TBP-based Pol II pre-initiation complex (PIC), in which Pol II core assembles with general transcription factors and other specific initiation factors including GTF2E1, GTF2E2, GTF2F1, GTF2F2, TCEA1, ERCC2, ERCC3, GTF2H2, GTF2H3, GTF2H4, GTF2H5, GTF2A1, GTF2A2, GTF2B and TBP; this large multi-subunit PIC complex mediates DNA unwinding and targets Pol II core to the transcription start site where the first phosphodiester bond forms.

The protein localises to the nucleus. TFIIF is a general transcription initiation factor that binds to RNA polymerase II and helps to recruit it to the initiation complex in collaboration with TFIIB. It promotes transcription elongation. The protein is General transcription factor IIF subunit 2 (Gtf2f2) of Rattus norvegicus (Rat).